The following is a 767-amino-acid chain: ATP-dependent rRNA helicase SPB4 (767 aa).

The Q motif motif lies at 28–56; it reads WTKLTPPLTPWVVSLLSDLGFGQMTPVQA. One can recognise a Helicase ATP-binding domain in the interval 59–291; that stretch reads IPLFVSHKDV…RIGLRNPVRV (233 aa). 72 to 79 provides a ligand contact to ATP; it reads AVTGSGKT. Residues 132–176 are disordered; sequence HVQAQQQQDQDEQDEQDEQEAQSDSDTDPDASTALNNKRKSSNHL. Positions 140 to 160 are enriched in acidic residues; sequence DQDEQDEQDEQEAQSDSDTDP. A DEAD box motif is present at residues 239-242; it reads DEAD. Residues 330-507 enclose the Helicase C-terminal domain; that stretch reads QLARIVLFES…ILEPAEDDAS (178 aa). A disordered region spans residues 609-767; that stretch reads KLSGDQAKPP…NADAEPFFVI (159 aa). Composition is skewed to basic and acidic residues over residues 636-645 and 659-681; these read CDSHDSDDAH and LERE…ANRE. A coiled-coil region spans residues 654–746; sequence KNKRKLEREK…RANSDNDDAM (93 aa). Residues 690-700 show a composition bias toward polar residues; it reads LKTQAAESSSN. A compositionally biased stretch (basic and acidic residues) spans 701-746; sequence AKHEPPQDDHDEHDWNDDYRKLQKDKRQQRQRNKADRANSDNDDAM. A compositionally biased stretch (low complexity) spans 749 to 761; sequence NSDSDAAAANADA.

Belongs to the DEAD box helicase family. DDX55/SPB4 subfamily. In terms of assembly, component of pre-60S ribosomal complexes.

It localises to the nucleus. The protein localises to the nucleolus. It carries out the reaction ATP + H2O = ADP + phosphate + H(+). ATP-binding RNA helicase involved in the biogenesis of 60S ribosomal subunits. Binds 90S pre-ribosomal particles and dissociates from pre-60S ribosomal particles after processing of 27SB pre-rRNA. Required for the normal formation of 18S rRNA through the processing of pre-rRNAs at sites A0, A1 and A2, and the normal formation of 25S and 5.8S rRNAs through the processing of pre-rRNAs at sites C1 and C2. In Mycosarcoma maydis (Corn smut fungus), this protein is ATP-dependent rRNA helicase SPB4.